The sequence spans 249 residues: 3-deoxy-D-manno-octulosonic acid kinase (249 aa).

The active site involves D175.

It belongs to the protein kinase superfamily. KdkA/RfaP family.

It localises to the cell inner membrane. It carries out the reaction an alpha-Kdo-(2-&gt;6)-lipid IVA + ATP = a 4-O-phospho-alpha-Kdo-(2-&gt;6)-lipid IVA + ADP + H(+). Its pathway is bacterial outer membrane biogenesis; LPS core biosynthesis. In terms of biological role, catalyzes the ATP-dependent phosphorylation of the 3-deoxy-D-manno-octulosonic acid (Kdo) residue in Kdo-lipid IV(A) at the 4-OH position. This is 3-deoxy-D-manno-octulosonic acid kinase from Xanthomonas euvesicatoria pv. vesicatoria (strain 85-10) (Xanthomonas campestris pv. vesicatoria).